The sequence spans 541 residues: Membrane protein insertase YidC (541 aa).

The next 5 membrane-spanning stretches (helical) occupy residues 6 to 26 (NILL…WQAD), 349 to 369 (FVGN…GLLF), 420 to 440 (GGCL…WVLL), 457 to 477 (LSVQ…MFVM), and 500 to 520 (MIFT…WLVG).

This sequence belongs to the OXA1/ALB3/YidC family. Type 1 subfamily. Interacts with the Sec translocase complex via SecD. Specifically interacts with transmembrane segments of nascent integral membrane proteins during membrane integration.

It localises to the cell inner membrane. Functionally, required for the insertion and/or proper folding and/or complex formation of integral membrane proteins into the membrane. Involved in integration of membrane proteins that insert both dependently and independently of the Sec translocase complex, as well as at least some lipoproteins. Aids folding of multispanning membrane proteins. The polypeptide is Membrane protein insertase YidC (Shewanella sp. (strain ANA-3)).